A 670-amino-acid chain; its full sequence is Cyclic AMP-dependent transcription factor ATF-6 alpha (670 aa).

The tract at residues 1 to 150 (MGEPAGVAGT…SLSSAEPLKE (150 aa)) is transcription activation. Residues 1 to 377 (MGEPAGVAGT…RLKVPSPKRR (377 aa)) lie on the Cytoplasmic side of the membrane. K87 is covalently cross-linked (Glycyl lysine isopeptide (Lys-Gly) (interchain with G-Cter in SUMO2)). Residues 91–183 (QPLSPASSSY…NSKPSIQPKP (93 aa)) are disordered. 2 stretches are compositionally biased toward low complexity: residues 94–113 (SPAS…SYSS) and 123–134 (LSSSSQMSPLSL). A Glycyl lysine isopeptide (Lys-Gly) (interchain with G-Cter in ubiquitin) cross-link involves residue K152. The region spanning 306–369 (VLRRQQRMIK…DEVVSENQRL (64 aa)) is the bZIP domain. The tract at residues 308–339 (RRQQRMIKNRESACQSRKKKKEYMLGLEARLK) is basic motif. Positions 348–355 (LKKENGTL) are leucine-zipper. The chain crosses the membrane as a helical; Signal-anchor for type II membrane protein span at residues 378 to 398 (VVCVMIVLAFIILNYGPMSML). Topologically, residues 399–670 (EQDSRRMNPS…VVSTIPESLQ (272 aa)) are lumenal. The tract at residues 468–589 (QPLINTTESL…ATTHNKTTRP (122 aa)) is interaction with THBS4. N-linked (GlcNAc...) asparagine glycosylation is found at N472, N584, and N643.

The protein belongs to the bZIP family. ATF subfamily. In terms of assembly, interacts with XBP1 isoform 2; the interaction occurs in a ER stress-dependent manner. Interacts with LACC1. As to quaternary structure, interacts with THBS4 (via EGF-like 3; calcium-binding domain) which facilitates its processing, activation and nuclear translocation. Interacts (via lumenal domain) with THBS1. Homodimer and heterodimer with ATF6-beta. The dimer interacts with the nuclear transcription factor Y (NF-Y) trimer through direct binding to NF-Y subunit C (NF-YC). Also interacts with the transcription factors GTF2I, YY1 and SRF. During unfolded protein response, a fragment of approximately 50 kDa containing the cytoplasmic transcription factor domain is released by proteolysis. The cleavage seems to be performed sequentially by site-1 (MBTPS1, S1P) and site-2 (MBTPS2, S2P) proteases. In terms of processing, N-glycosylated; in its luminal domain. The glycosylation status may serve as a sensor for ER homeostasis, resulting in ATF6 activation to trigger the unfolded protein response (UPR). Post-translationally, ubiquitinated by RNF186 at Lys-152, which is required for pattern recognition receptor-induced unfolded protein response-associated outcomes. In terms of tissue distribution, ubiquitous.

The protein localises to the endoplasmic reticulum membrane. It localises to the golgi apparatus membrane. Its subcellular location is the nucleus. Precursor of the transcription factor form (Processed cyclic AMP-dependent transcription factor ATF-6 alpha), which is embedded in the endoplasmic reticulum membrane. Endoplasmic reticulum stress promotes processing of this form, releasing the transcription factor form that translocates into the nucleus, where it activates transcription of genes involved in the unfolded protein response (UPR). Its function is as follows. Transcription factor that initiates the unfolded protein response (UPR) during endoplasmic reticulum stress by activating transcription of genes involved in the UPR. Binds DNA on the 5'-CCAC[GA]-3'half of the ER stress response element (ERSE) (5'-CCAAT-N(9)-CCAC[GA]-3') and of ERSE II (5'-ATTGG-N-CCACG-3'). Binding to ERSE requires binding of NF-Y to ERSE. Could also be involved in activation of transcription by the serum response factor. May play a role in foveal development and cone function in the retina. The sequence is that of Cyclic AMP-dependent transcription factor ATF-6 alpha (ATF6) from Homo sapiens (Human).